The sequence spans 131 residues: Amicyanin (131 aa).

The first 26 residues, 1-26, serve as a signal peptide directing secretion; the sequence is MISATKIRSCLAACVLAAFGATGALA. The Plastocyanin-like domain occupies 27-131; that stretch reads DKATIPSESP…PFMRGKVVVE (105 aa). Cu cation is bound by residues His79, Cys118, His121, and Met124.

It depends on Cu cation as a cofactor.

Its subcellular location is the periplasm. It participates in one-carbon metabolism; methylamine degradation. Primary acceptor of electrons from methylamine dehydrogenase. Passes those electrons on either a soluble cytochrome c or to pseudoazurin. In Paracoccus denitrificans, this protein is Amicyanin (mauC).